We begin with the raw amino-acid sequence, 505 residues long: Glycerol kinase 2 (505 aa).

Thr-17 is an ADP binding site. ATP-binding residues include Thr-17, Thr-18, and Ser-19. Thr-17 lines the sn-glycerol 3-phosphate pocket. ADP is bound at residue Arg-21. Sn-glycerol 3-phosphate contacts are provided by Arg-87, Glu-88, Tyr-139, and Asp-249. Residues Arg-87, Glu-88, Tyr-139, Asp-249, and Gln-250 each coordinate glycerol. Residues Thr-271 and Gly-314 each coordinate ADP. ATP contacts are provided by Thr-271, Gly-314, Gln-318, and Gly-415. ADP contacts are provided by Gly-415 and Asn-419.

This sequence belongs to the FGGY kinase family.

The enzyme catalyses glycerol + ATP = sn-glycerol 3-phosphate + ADP + H(+). It participates in polyol metabolism; glycerol degradation via glycerol kinase pathway; sn-glycerol 3-phosphate from glycerol: step 1/1. Its activity is regulated as follows. Inhibited by fructose 1,6-bisphosphate (FBP). Key enzyme in the regulation of glycerol uptake and metabolism. Catalyzes the phosphorylation of glycerol to yield sn-glycerol 3-phosphate. The sequence is that of Glycerol kinase 2 from Pseudomonas aeruginosa (strain ATCC 15692 / DSM 22644 / CIP 104116 / JCM 14847 / LMG 12228 / 1C / PRS 101 / PAO1).